The primary structure comprises 849 residues: SMY2 homolog 2 (849 aa).

The GYF domain maps to E149–G205. Disordered stretches follow at residues A305–L505, D527–R547, T593–D612, and N634–N661. The span at S308 to T318 shows a compositional bias: low complexity. Residues S319 to A331 show a composition bias toward basic and acidic residues. A Phosphothreonine modification is found at T350. Basic and acidic residues-rich tracts occupy residues T361–N375, V387–D403, and L425–R443. Residues E410–I484 adopt a coiled-coil conformation. Basic residues predominate over residues K444–Q455. A compositionally biased stretch (basic and acidic residues) spans K456–E479. A compositionally biased stretch (polar residues) spans N483 to L505. A compositionally biased stretch (polar residues) spans K594–N605. The span at S644–N661 shows a compositional bias: low complexity.

This sequence belongs to the SMY2/mpd2 family. In terms of assembly, interacts with ribosomes. Interacts with EAP1 and MSL5 (via the GYP domain).

Its subcellular location is the cytoplasm. This chain is SMY2 homolog 2 (SYH1), found in Saccharomyces cerevisiae (strain ATCC 204508 / S288c) (Baker's yeast).